A 354-amino-acid polypeptide reads, in one-letter code: Ribosomal RNA large subunit methyltransferase M (354 aa).

Residues Ser-183, 216 to 219, Asp-235, Asp-255, and Asp-271 each bind S-adenosyl-L-methionine; that span reads SPGG. Residue Lys-300 is the Proton acceptor of the active site.

The protein belongs to the class I-like SAM-binding methyltransferase superfamily. RNA methyltransferase RlmE family. RlmM subfamily. In terms of assembly, monomer.

Its subcellular location is the cytoplasm. It carries out the reaction cytidine(2498) in 23S rRNA + S-adenosyl-L-methionine = 2'-O-methylcytidine(2498) in 23S rRNA + S-adenosyl-L-homocysteine + H(+). Its function is as follows. Catalyzes the 2'-O-methylation at nucleotide C2498 in 23S rRNA. The chain is Ribosomal RNA large subunit methyltransferase M from Pseudomonas putida (strain GB-1).